A 61-amino-acid polypeptide reads, in one-letter code: Small ribosomal subunit protein uS14 (61 aa).

Zn(2+)-binding residues include Cys-24, Cys-27, Cys-40, and Cys-43.

The protein belongs to the universal ribosomal protein uS14 family. Zinc-binding uS14 subfamily. As to quaternary structure, part of the 30S ribosomal subunit. Contacts proteins S3 and S10. The cofactor is Zn(2+).

Its function is as follows. Binds 16S rRNA, required for the assembly of 30S particles and may also be responsible for determining the conformation of the 16S rRNA at the A site. This chain is Small ribosomal subunit protein uS14, found in Kosmotoga olearia (strain ATCC BAA-1733 / DSM 21960 / TBF 19.5.1).